A 200-amino-acid chain; its full sequence is Adenylate kinase (200 aa).

ATP is bound at residue 10–15 (GAGKGT). Positions 30-59 (STGDLFRANISQQTELGKLAKSYMDAGNLV) are NMP. AMP is bound by residues Thr-31, Arg-36, 57 to 59 (NLV), 84 to 87 (GFPR), and Gln-91. An LID region spans residues 125–163 (GRRVCRNDSAHVFHVTYTPPKKEGVCDVCGGELYQRDDD). Residues Arg-126 and 136-137 (VF) each bind ATP. 2 residues coordinate AMP: Arg-160 and Arg-171.

Belongs to the adenylate kinase family. Monomer.

It localises to the cytoplasm. It catalyses the reaction AMP + ATP = 2 ADP. It functions in the pathway purine metabolism; AMP biosynthesis via salvage pathway; AMP from ADP: step 1/1. In terms of biological role, catalyzes the reversible transfer of the terminal phosphate group between ATP and AMP. Plays an important role in cellular energy homeostasis and in adenine nucleotide metabolism. The sequence is that of Adenylate kinase from Streptomyces lividans.